The primary structure comprises 76 residues: uncharacterized protein (76 aa).

A required for interaction with PPP3CA region spans residues 36–41; it reads PDIIIT. Phosphothreonine occurs at positions 44 and 46.

Interacts (via PxIxIT motif, when phosphorylated on Thr-44) with PPP3CA. In terms of tissue distribution, not expressed in pancreatic duct cells (at protein level). Abundantly expressed in the pancreas and weakly expressed in the thyroid. As to expression, not expressed in pancreatic duct cells (at protein level). Abundantly expressed in the lymph node and weakly expressed in the stomach, trachea and bone marrow.

This is an uncharacterized protein from Homo sapiens (Human).